The primary structure comprises 608 residues: Phosphoenolpyruvate carboxykinase [GTP] (608 aa).

Substrate contacts are provided by residues arginine 82 and 222–224; that span reads YGG. The Mn(2+) site is built by lysine 231 and histidine 251. A substrate-binding site is contributed by serine 273. 274–279 is a binding site for GTP; the sequence is ACGKTN. Residue cysteine 275 is part of the active site. Aspartate 298 contacts Mn(2+). 389–391 provides a ligand contact to substrate; it reads NSR. Residues arginine 391, arginine 422, and 517–520 contribute to the GTP site; that span reads FGDN.

The protein belongs to the phosphoenolpyruvate carboxykinase [GTP] family. As to quaternary structure, monomer. Requires Mn(2+) as cofactor.

It localises to the cytoplasm. The enzyme catalyses oxaloacetate + GTP = phosphoenolpyruvate + GDP + CO2. The protein operates within carbohydrate biosynthesis; gluconeogenesis. Functionally, catalyzes the conversion of oxaloacetate (OAA) to phosphoenolpyruvate (PEP), the rate-limiting step in the metabolic pathway that produces glucose from lactate and other precursors derived from the citric acid cycle. In Paenarthrobacter aurescens (strain TC1), this protein is Phosphoenolpyruvate carboxykinase [GTP].